Here is a 424-residue protein sequence, read N- to C-terminus: Microcin H47 secretion protein MchE (424 aa).

The Cytoplasmic portion of the chain corresponds to 1–25 (MFRQDALENRKMKWQGRAILLPGIP). The chain crosses the membrane as a helical span at residues 26–46 (LWLIMLGSIVFITAFLMFIIV). Over 47 to 424 (GTYSRRVNVS…KHSATGPLND (378 aa)) the chain is Periplasmic.

This sequence belongs to the membrane fusion protein (MFP) (TC 8.A.1) family.

The protein localises to the cell inner membrane. Functionally, probably involved, in conjunction with MchF, in the secretion of microcin H47. The sequence is that of Microcin H47 secretion protein MchE (mchE) from Escherichia coli.